The sequence spans 152 residues: MKLIASNKKAYFDYEILETLEAGLALLGSEVKALRQTRVNLKDNFVKIIKGEAFLFGVHISYLDTIHAYYKPNERRERKLLLHKKQLLKWQIEASKERLSIVGLKLYFNQRNRAKIQIALVKGKRLHDKRQSLKEKALNKEILADLKHHFKG.

Belongs to the SmpB family.

The protein localises to the cytoplasm. Functionally, required for rescue of stalled ribosomes mediated by trans-translation. Binds to transfer-messenger RNA (tmRNA), required for stable association of tmRNA with ribosomes. tmRNA and SmpB together mimic tRNA shape, replacing the anticodon stem-loop with SmpB. tmRNA is encoded by the ssrA gene; the 2 termini fold to resemble tRNA(Ala) and it encodes a 'tag peptide', a short internal open reading frame. During trans-translation Ala-aminoacylated tmRNA acts like a tRNA, entering the A-site of stalled ribosomes, displacing the stalled mRNA. The ribosome then switches to translate the ORF on the tmRNA; the nascent peptide is terminated with the 'tag peptide' encoded by the tmRNA and targeted for degradation. The ribosome is freed to recommence translation, which seems to be the essential function of trans-translation. The chain is SsrA-binding protein from Helicobacter pylori (strain HPAG1).